The sequence spans 241 residues: Orotidine 5'-phosphate decarboxylase (241 aa).

Residues aspartate 15, lysine 36, aspartate 63–threonine 72, threonine 127, arginine 189, glutamine 198, glycine 218, and arginine 219 contribute to the substrate site. Lysine 65 (proton donor) is an active-site residue.

This sequence belongs to the OMP decarboxylase family. Type 1 subfamily. Homodimer.

It catalyses the reaction orotidine 5'-phosphate + H(+) = UMP + CO2. It functions in the pathway pyrimidine metabolism; UMP biosynthesis via de novo pathway; UMP from orotate: step 2/2. Functionally, catalyzes the decarboxylation of orotidine 5'-monophosphate (OMP) to uridine 5'-monophosphate (UMP). This chain is Orotidine 5'-phosphate decarboxylase, found in Prochlorococcus marinus (strain MIT 9211).